A 217-amino-acid polypeptide reads, in one-letter code: 3-demethoxyubiquinol 3-hydroxylase (217 aa).

Fe cation contacts are provided by Glu66, Glu96, His99, Glu148, Glu180, and His183.

Belongs to the COQ7 family. Requires Fe cation as cofactor.

The protein resides in the cell membrane. The catalysed reaction is a 5-methoxy-2-methyl-3-(all-trans-polyprenyl)benzene-1,4-diol + AH2 + O2 = a 3-demethylubiquinol + A + H2O. Its pathway is cofactor biosynthesis; ubiquinone biosynthesis. In terms of biological role, catalyzes the hydroxylation of 2-nonaprenyl-3-methyl-6-methoxy-1,4-benzoquinol during ubiquinone biosynthesis. The polypeptide is 3-demethoxyubiquinol 3-hydroxylase (Xanthomonas campestris pv. campestris (strain 8004)).